The following is a 380-amino-acid chain: 3-isopropylmalate dehydrogenase (380 aa).

NAD(+) is bound at residue 79 to 90; the sequence is GPEWAGVHPTPE. 4 residues coordinate substrate: arginine 97, arginine 107, arginine 136, and aspartate 229. Positions 229, 254, and 258 each coordinate Mg(2+). 294–306 serves as a coordination point for NAD(+); the sequence is GSAPDISGKGLAN.

This sequence belongs to the isocitrate and isopropylmalate dehydrogenases family. Homodimer. It depends on Mg(2+) as a cofactor. Requires Mn(2+) as cofactor.

The protein localises to the cytoplasm. The enzyme catalyses (2R,3S)-3-isopropylmalate + NAD(+) = 4-methyl-2-oxopentanoate + CO2 + NADH. It functions in the pathway amino-acid biosynthesis; L-leucine biosynthesis; L-leucine from 3-methyl-2-oxobutanoate: step 3/4. Catalyzes the oxidation of 3-carboxy-2-hydroxy-4-methylpentanoate (3-isopropylmalate) to 3-carboxy-4-methyl-2-oxopentanoate. The product decarboxylates to 4-methyl-2 oxopentanoate. This chain is 3-isopropylmalate dehydrogenase (LEU2), found in Hapsidospora chrysogena (Acremonium chrysogenum).